A 633-amino-acid chain; its full sequence is Chaperone protein dnaK2 (633 aa).

At T197 the chain carries Phosphothreonine; by autocatalysis. Residues 513-532 are compositionally biased toward basic and acidic residues; the sequence is AEQNASSDKERREKIERKNQ. Disordered regions lie at residues 513 to 534 and 598 to 633; these read AEQN…NQAD and QQAG…TETK. Positions 606–619 are enriched in low complexity; the sequence is PGAAPQDGGTTSSD. Acidic residues predominate over residues 620 to 633; sequence GGDDVIDADFTETK.

The protein belongs to the heat shock protein 70 family.

Functionally, acts as a chaperone. The sequence is that of Chaperone protein dnaK2 (dnaK2) from Nostoc sp. (strain PCC 7120 / SAG 25.82 / UTEX 2576).